The sequence spans 343 residues: Homeobox-leucine zipper protein HOX16 (343 aa).

The segment at residues 74 to 133 (LPEKKRRLTPEQVHLLERSFEEENKLEPERKTELARKLGLQPRQVAVWFQNRRARWKTKQ) is a DNA-binding region (homeobox). The interval 132–176 (KQLERDFDRLKASFDALRADHDALLQDNHRLHSQVMSLTEKLQEK) is leucine-zipper. A disordered region spans residues 218–239 (FEEQQEQQVKAEDRLSTGSGGS).

This sequence belongs to the HD-ZIP homeobox family. Class I subfamily. In terms of tissue distribution, expressed in seedlings, stems, leaf sheaths and blades and panicles.

The protein localises to the nucleus. Probable transcription factor. In Oryza sativa subsp. japonica (Rice), this protein is Homeobox-leucine zipper protein HOX16 (HOX16).